The following is a 483-amino-acid chain: Glutamyl-tRNA(Gln) amidotransferase subunit A (483 aa).

Catalysis depends on charge relay system residues Lys76 and Ser151. Ser175 acts as the Acyl-ester intermediate in catalysis.

The protein belongs to the amidase family. GatA subfamily. Heterotrimer of A, B and C subunits.

The enzyme catalyses L-glutamyl-tRNA(Gln) + L-glutamine + ATP + H2O = L-glutaminyl-tRNA(Gln) + L-glutamate + ADP + phosphate + H(+). Allows the formation of correctly charged Gln-tRNA(Gln) through the transamidation of misacylated Glu-tRNA(Gln) in organisms which lack glutaminyl-tRNA synthetase. The reaction takes place in the presence of glutamine and ATP through an activated gamma-phospho-Glu-tRNA(Gln). The protein is Glutamyl-tRNA(Gln) amidotransferase subunit A of Pseudomonas syringae pv. syringae (strain B728a).